A 420-amino-acid polypeptide reads, in one-letter code: Phosphoglycerate kinase, cytosolic (420 aa).

The (2R)-3-phosphoglycerate site is built by valine 23, aspartate 24, phenylalanine 25, asparagine 26, arginine 39, serine 61, histidine 62, glycine 64, arginine 65, arginine 135, histidine 171, and arginine 172. ADP is bound by residues glycine 217 and alanine 218. Glycine 217 lines the CDP pocket. The AMP site is built by alanine 218 and lysine 219. Alanine 218 is an ATP binding site. Alanine 218 contacts Mg(2+). Residue lysine 219 coordinates (2R)-3-phosphoglycerate. Aspartate 222 lines the CDP pocket. Aspartate 222 is a binding site for Mg(2+). ADP-binding residues include lysine 223 and glycine 241. AMP is bound at residue lysine 223. Residue lysine 223 participates in ATP binding. Glycine 241 provides a ligand contact to CDP. Alanine 242 and alanine 314 together coordinate AMP. Residues alanine 242 and alanine 314 each coordinate ATP. ADP is bound by residues alanine 314 and asparagine 338. Residues glycine 339 and phenylalanine 344 each contribute to the CDP site. The ADP site is built by phenylalanine 344, glutamate 345, glutamate 377, and serine 378. Glutamate 345 is a binding site for AMP. The ATP site is built by glutamate 345, glutamate 377, and serine 378. Position 377 (glutamate 377) interacts with Mg(2+).

This sequence belongs to the phosphoglycerate kinase family. Monomer. The cofactor is Mg(2+).

The protein localises to the cytoplasm. It catalyses the reaction (2R)-3-phosphoglycerate + ATP = (2R)-3-phospho-glyceroyl phosphate + ADP. The protein operates within carbohydrate degradation; glycolysis; pyruvate from D-glyceraldehyde 3-phosphate: step 2/5. In Trypanosoma brucei brucei, this protein is Phosphoglycerate kinase, cytosolic.